A 189-amino-acid chain; its full sequence is Elongation factor P (189 aa).

Belongs to the elongation factor P family.

The protein resides in the cytoplasm. It functions in the pathway protein biosynthesis; polypeptide chain elongation. Its function is as follows. Involved in peptide bond synthesis. Stimulates efficient translation and peptide-bond synthesis on native or reconstituted 70S ribosomes in vitro. Probably functions indirectly by altering the affinity of the ribosome for aminoacyl-tRNA, thus increasing their reactivity as acceptors for peptidyl transferase. This is Elongation factor P from Campylobacter jejuni subsp. doylei (strain ATCC BAA-1458 / RM4099 / 269.97).